The primary structure comprises 293 residues: MADGVVIVDKPAGWTSHDVVARVRRLAGTRRVGHAGTLDPMATGVLVVGVGKATRLLGYLALTEKVYEATIRLGQSTTTDDAEGELLERRPADHIDEAAVHAGTRALTGVIHQVPPQVSAVKVRGQRAYRRARAGETVELKAREVTVHEFTVTGFRRVDSPDGAFVDVDARVTCSSGTYIRSLARDLGADLGVGGHLTALRRTRVGPYTVEQAATLDELAAEFTVMPLAEAVAAAFPVRRLSAGEARRVVHGHRISPSGHSGPVGLFAPDGRVLALAENRSGSSQPVVVFAGS.

D39 acts as the Nucleophile in catalysis.

Belongs to the pseudouridine synthase TruB family. Type 1 subfamily.

It catalyses the reaction uridine(55) in tRNA = pseudouridine(55) in tRNA. Functionally, responsible for synthesis of pseudouridine from uracil-55 in the psi GC loop of transfer RNAs. The polypeptide is tRNA pseudouridine synthase B (Thermobifida fusca (strain YX)).